Consider the following 307-residue polypeptide: Thioredoxin reductase (307 aa).

34 to 41 is a binding site for FAD; sequence ESKAHGGQ. Cys134 and Cys137 form a disulfide bridge. Position 275–284 (275–284) interacts with FAD; it reads DVRAKSFRQV.

Belongs to the class-II pyridine nucleotide-disulfide oxidoreductase family. As to quaternary structure, homodimer. FAD is required as a cofactor.

It localises to the cytoplasm. It catalyses the reaction [thioredoxin]-dithiol + NADP(+) = [thioredoxin]-disulfide + NADPH + H(+). This is Thioredoxin reductase (trxB) from Treponema pallidum (strain Nichols).